A 231-amino-acid polypeptide reads, in one-letter code: Flagellar L-ring protein (231 aa).

The first 18 residues, 1 to 18, serve as a signal peptide directing secretion; sequence MKHLLSVFALGGAVLLAG. Cys19 carries N-palmitoyl cysteine lipidation. Cys19 carries S-diacylglycerol cysteine lipidation.

The protein belongs to the FlgH family. In terms of assembly, the basal body constitutes a major portion of the flagellar organelle and consists of four rings (L,P,S, and M) mounted on a central rod.

It is found in the cell outer membrane. Its subcellular location is the bacterial flagellum basal body. Functionally, assembles around the rod to form the L-ring and probably protects the motor/basal body from shearing forces during rotation. The protein is Flagellar L-ring protein of Pseudomonas entomophila (strain L48).